A 275-amino-acid chain; its full sequence is Large ribosomal subunit protein uL2 (275 aa).

A disordered region spans residues 222-257 (GTAMNAVDHPHGGGRGRSKGNNQPRSPWNQPAKGFK). Residues 240–250 (KGNNQPRSPWN) show a composition bias toward polar residues.

Belongs to the universal ribosomal protein uL2 family. In terms of assembly, part of the 50S ribosomal subunit. Forms a bridge to the 30S subunit in the 70S ribosome.

In terms of biological role, one of the primary rRNA binding proteins. Required for association of the 30S and 50S subunits to form the 70S ribosome, for tRNA binding and peptide bond formation. It has been suggested to have peptidyltransferase activity; this is somewhat controversial. Makes several contacts with the 16S rRNA in the 70S ribosome. This chain is Large ribosomal subunit protein uL2, found in Endomicrobium trichonymphae.